We begin with the raw amino-acid sequence, 352 residues long: Protein RecA (352 aa).

ATP is bound at residue 67–74; the sequence is GPESSGKT.

This sequence belongs to the RecA family.

It localises to the cytoplasm. In terms of biological role, can catalyze the hydrolysis of ATP in the presence of single-stranded DNA, the ATP-dependent uptake of single-stranded DNA by duplex DNA, and the ATP-dependent hybridization of homologous single-stranded DNAs. It interacts with LexA causing its activation and leading to its autocatalytic cleavage. The polypeptide is Protein RecA (Chlamydia trachomatis serovar L2 (strain ATCC VR-902B / DSM 19102 / 434/Bu)).